Consider the following 49-residue polypeptide: Astexin-3 (49 aa).

Positions 1-25 (MRTYNRSLPARAGLTDLGKVTTHTK) are excised as a propeptide. The segment at residues 26–34 (GPTPMVGLD) is a cross-link (isoaspartyl glycine isopeptide (Gly-Asp)).

Post-translationally, this lasso peptide is hydrolyzed to a linear form by the isopeptidase AtxE2, in vitro. The isopeptidase AtxE2 only recognizes the threaded form (but not the unthreaded form).

It localises to the cytoplasm. The protein resides in the secreted. Its function is as follows. Shows weak antimicrobial activity against its phylogenetic relative Caulobacter crescentus. Does not show activity against other bacteria tested (E.coli, Vibrio sp, Burkhoderia thailandensis, and Salmonella newport). This is Astexin-3 from Asticcacaulis excentricus (strain ATCC 15261 / DSM 4724 / KCTC 12464 / NCIMB 9791 / VKM B-1370 / CB 48).